A 323-amino-acid chain; its full sequence is Probable cell division protein WhiA (323 aa).

The segment at residues 275–309 (TLKELGEMLTTGQVSKSGINHRLRKLDQIAERLRS) is a DNA-binding region (H-T-H motif).

Belongs to the WhiA family.

Its function is as follows. Involved in cell division and chromosome segregation. The chain is Probable cell division protein WhiA from Listeria monocytogenes serotype 4b (strain CLIP80459).